The following is a 418-amino-acid chain: S-adenosylmethionine synthase (418 aa).

Residue histidine 16 participates in ATP binding. Aspartate 18 lines the Mg(2+) pocket. Residue glutamate 44 participates in K(+) binding. The L-methionine site is built by glutamate 57 and glutamine 100. The interval 100-110 (QSPDISQGVTK) is flexible loop. ATP-binding positions include 175 to 177 (DGK), 251 to 252 (KF), aspartate 260, 266 to 267 (RK), alanine 283, and lysine 287. L-methionine is bound at residue aspartate 260. Lysine 291 serves as a coordination point for L-methionine.

This sequence belongs to the AdoMet synthase family. In terms of assembly, homotetramer; dimer of dimers. Requires Mg(2+) as cofactor. K(+) serves as cofactor.

It is found in the cytoplasm. The enzyme catalyses L-methionine + ATP + H2O = S-adenosyl-L-methionine + phosphate + diphosphate. It functions in the pathway amino-acid biosynthesis; S-adenosyl-L-methionine biosynthesis; S-adenosyl-L-methionine from L-methionine: step 1/1. Functionally, catalyzes the formation of S-adenosylmethionine (AdoMet) from methionine and ATP. The overall synthetic reaction is composed of two sequential steps, AdoMet formation and the subsequent tripolyphosphate hydrolysis which occurs prior to release of AdoMet from the enzyme. In Gloeothece citriformis (strain PCC 7424) (Cyanothece sp. (strain PCC 7424)), this protein is S-adenosylmethionine synthase.